A 333-amino-acid chain; its full sequence is uncharacterized protein (333 aa).

The N-terminal stretch at 1–16 (MRPFLMILSVTYIASA) is a signal peptide. A glycan (N-linked (GlcNAc...) asparagine) is linked at Asn204.

This is an uncharacterized protein from Encephalitozoon cuniculi (strain GB-M1) (Microsporidian parasite).